The primary structure comprises 401 residues: Decapping and exoribonuclease protein (401 aa).

The interval 1–27 (MEGNKSMQREKIDRPMKRGPEQNSLSP) is disordered. A compositionally biased stretch (basic and acidic residues) spans 7-20 (MQREKIDRPMKRGP). Substrate-binding positions include arginine 69, glutamate 114, and 149–151 (WRG). Glutamate 210 lines the Mg(2+) pocket. Residues cysteine 235 and glutamate 252 each coordinate substrate. Residues glutamate 252, aspartate 254, glutamate 271, and leucine 272 each contribute to the Mg(2+) site. The substrate site is built by lysine 273 and glutamine 298.

Belongs to the DXO/Dom3Z family. Mg(2+) serves as cofactor.

It localises to the nucleus. It catalyses the reaction a 5'-end triphospho-ribonucleoside in mRNA + H2O = a 5'-end phospho-ribonucleoside in mRNA + diphosphate + H(+). The enzyme catalyses a 5'-end NAD(+)-phospho-ribonucleoside in mRNA + H2O = a 5'-end phospho-ribonucleoside in mRNA + NAD(+) + H(+). The catalysed reaction is a 5'-end NAD(+)-phospho-ribonucleoside in snoRNA + H2O = a 5'-end phospho-ribonucleoside in snoRNA + NAD(+) + H(+). It carries out the reaction a 5'-end (N(7)-methyl 5'-triphosphoguanosine)-ribonucleoside-ribonucleotide in mRNA + H2O = a (N(7)-methyl 5'-triphosphoguanosine)-nucleoside + a 5'-end phospho-ribonucleoside in mRNA + H(+). It catalyses the reaction a 5'-end FAD-phospho-ribonucleoside in mRNA + H2O = a 5'-end phospho-ribonucleoside in mRNA + FAD + H(+). The enzyme catalyses a 5'-end CoA-ribonucleoside in mRNA + H2O = 3'-dephospho-CoA + a 5'-end phospho-ribonucleoside in mRNA + H(+). Decapping enzyme for NAD-capped RNAs: specifically hydrolyzes the nicotinamide adenine dinucleotide (NAD) cap from a subset of RNAs by removing the entire NAD moiety from the 5'-end of an NAD-capped RNA. The NAD-cap is present at the 5'-end of some RNAs and snoRNAs. In contrast to the canonical 5'-end N7 methylguanosine (m7G) cap, the NAD cap promotes mRNA decay. Also acts as a non-canonical decapping enzyme that removes the entire cap structure of m7G capped or incompletely capped RNAs and mediates their subsequent degradation. Specifically degrades pre-mRNAs with a defective 5'-end m7G cap and is part of a pre-mRNA capping quality control. Has decapping activity toward incomplete 5'-end m7G cap mRNAs such as unmethylated 5'-end-capped RNA (cap0), while it has no activity toward 2'-O-ribose methylated m7G cap (cap1). Also has 5'-3' exoribonuclease activities: The 5'-end monophosphate RNA is then degraded by the 5'-3' exoribonuclease activity, enabling this enzyme to decap and degrade incompletely capped mRNAs. Also possesses RNA 5'-pyrophosphohydrolase activity by hydrolyzing the 5'-end triphosphate to release pyrophosphates. Exhibits decapping activity towards FAD-capped RNAs. Exhibits decapping activity towards dpCoA-capped RNAs in vitro. The chain is Decapping and exoribonuclease protein from Xenopus laevis (African clawed frog).